We begin with the raw amino-acid sequence, 99 residues long: Small ribosomal subunit protein bS20 (99 aa).

The protein belongs to the bacterial ribosomal protein bS20 family.

Its function is as follows. Binds directly to 16S ribosomal RNA. In Caldicellulosiruptor bescii (strain ATCC BAA-1888 / DSM 6725 / KCTC 15123 / Z-1320) (Anaerocellum thermophilum), this protein is Small ribosomal subunit protein bS20.